A 286-amino-acid chain; its full sequence is MVAVIIKGNEVAEKKRAQLTEEVVKLKEQGIVPGLAVILVGEDPASRSYVKGKEKGCEQVGIYSELIELPETITEERLLAEIDRLNGDDRINGILVQLPLPKHIEEKAIIERISPEKDVDGFHPISVGRMMTGQDTFLPCTPHGIVELVKETNLDISGKHVVVIGRSNIVGKPVGQLFLNENATVTYCHSKTQNMKELSKLADILIVAVGRPKMITADYIKEGAVVIDVGVNRLETGKLCGDVDFDNVLDVAGYITPVPKGVGPMTITMLLHNTVESAKRAGVVCK.

Residues 165–167 (GRS), S190, and V231 contribute to the NADP(+) site.

This sequence belongs to the tetrahydrofolate dehydrogenase/cyclohydrolase family. As to quaternary structure, homodimer.

The enzyme catalyses (6R)-5,10-methylene-5,6,7,8-tetrahydrofolate + NADP(+) = (6R)-5,10-methenyltetrahydrofolate + NADPH. It carries out the reaction (6R)-5,10-methenyltetrahydrofolate + H2O = (6R)-10-formyltetrahydrofolate + H(+). Its pathway is one-carbon metabolism; tetrahydrofolate interconversion. Catalyzes the oxidation of 5,10-methylenetetrahydrofolate to 5,10-methenyltetrahydrofolate and then the hydrolysis of 5,10-methenyltetrahydrofolate to 10-formyltetrahydrofolate. This is Bifunctional protein FolD from Bacillus cereus (strain ATCC 14579 / DSM 31 / CCUG 7414 / JCM 2152 / NBRC 15305 / NCIMB 9373 / NCTC 2599 / NRRL B-3711).